Here is a 905-residue protein sequence, read N- to C-terminus: uncharacterized protein (905 aa).

WD repeat units follow at residues 42 to 82 (RSLK…FQAV), 86 to 128 (GYAR…SDPK), 136 to 175 (STLD…DSVS), and 177 to 217 (VNTQ…SDNY). Phosphoserine is present on residues Ser394 and Ser397.

The protein belongs to the WD repeat mio family.

This is an uncharacterized protein from Schizosaccharomyces pombe (strain 972 / ATCC 24843) (Fission yeast).